Consider the following 467-residue polypeptide: tRNA-2-methylthio-N(6)-dimethylallyladenosine synthase (467 aa).

Residues 1–20 are disordered; it reads MSDDTTQIEPAMAQETSPRA. The MTTase N-terminal domain maps to 23–143; it reads RKVFVKTYGC…LPNALARVRG (121 aa). C32, C68, C106, C184, C188, and C191 together coordinate [4Fe-4S] cluster. A Radical SAM core domain is found at 170–402; that stretch reads RKRGVSAFLT…QALLSAQQYA (233 aa). The TRAM domain maps to 405–467; the sequence is DSMIGRKMDV…TNSLIAQKLA (63 aa).

It belongs to the methylthiotransferase family. MiaB subfamily. In terms of assembly, monomer. [4Fe-4S] cluster serves as cofactor.

The protein localises to the cytoplasm. The catalysed reaction is N(6)-dimethylallyladenosine(37) in tRNA + (sulfur carrier)-SH + AH2 + 2 S-adenosyl-L-methionine = 2-methylsulfanyl-N(6)-dimethylallyladenosine(37) in tRNA + (sulfur carrier)-H + 5'-deoxyadenosine + L-methionine + A + S-adenosyl-L-homocysteine + 2 H(+). In terms of biological role, catalyzes the methylthiolation of N6-(dimethylallyl)adenosine (i(6)A), leading to the formation of 2-methylthio-N6-(dimethylallyl)adenosine (ms(2)i(6)A) at position 37 in tRNAs that read codons beginning with uridine. The sequence is that of tRNA-2-methylthio-N(6)-dimethylallyladenosine synthase from Brucella melitensis biotype 1 (strain ATCC 23456 / CCUG 17765 / NCTC 10094 / 16M).